The sequence spans 428 residues: ATP-dependent RNA helicase RhlB (428 aa).

Residues 9–37 carry the Q motif motif; sequence QKFSDFALHPLVLEALEKKGFQHCTPIQA. In terms of domain architecture, Helicase ATP-binding spans 40-219; the sequence is LPLTLSGRDV…FEQMNNAEYV (180 aa). Residue 53–60 coordinates ATP; it reads AQTGTGKT. The short motif at 165-168 is the DEAD box element; that stretch reads DEAD. A Helicase C-terminal domain is found at 245 to 390; it reads RLLQTLIEEE…VSKYNSDALL (146 aa). The interval 392–428 is disordered; it reads DLPAPKRLARPRGGNGPRRNSAPRRGGAPRNNRKRSG. The segment covering 408-421 has biased composition (low complexity); sequence PRRNSAPRRGGAPR.

This sequence belongs to the DEAD box helicase family. RhlB subfamily. Component of the RNA degradosome, which is a multiprotein complex involved in RNA processing and mRNA degradation.

It localises to the cytoplasm. It carries out the reaction ATP + H2O = ADP + phosphate + H(+). In terms of biological role, DEAD-box RNA helicase involved in RNA degradation. Has RNA-dependent ATPase activity and unwinds double-stranded RNA. The chain is ATP-dependent RNA helicase RhlB from Serratia proteamaculans (strain 568).